The following is a 151-amino-acid chain: UPF0178 protein amb2838 (151 aa).

Belongs to the UPF0178 family.

This Paramagnetospirillum magneticum (strain ATCC 700264 / AMB-1) (Magnetospirillum magneticum) protein is UPF0178 protein amb2838.